A 439-amino-acid chain; its full sequence is uncharacterized protein (439 aa).

3 disordered regions span residues 1 to 36 (MRPGNAATAHDTGTQPRPGPTENWRSPAAVTRSKQA), 126 to 157 (SRTGAAVSDEYRPTGAALEQPGQEPGGTGVPI), and 411 to 439 (FRSDVPQPPPSPACRTTRAGSGAVAAVPR).

This is an uncharacterized protein from Streptomyces fradiae (Streptomyces roseoflavus).